The primary structure comprises 147 residues: Large ribosomal subunit protein uL16 (147 aa).

Belongs to the universal ribosomal protein uL16 family. In terms of assembly, part of the 50S ribosomal subunit.

Its function is as follows. Binds 23S rRNA and is also seen to make contacts with the A and possibly P site tRNAs. This Finegoldia magna (strain ATCC 29328 / DSM 20472 / WAL 2508) (Peptostreptococcus magnus) protein is Large ribosomal subunit protein uL16.